The primary structure comprises 511 residues: 2,3-bisphosphoglycerate-independent phosphoglycerate mutase (511 aa).

D12 contributes to the Mn(2+) binding site. Y36 bears the Phosphotyrosine mark. A Mn(2+)-binding site is contributed by S62. The active-site Phosphoserine intermediate is S62. Substrate contacts are provided by residues H123, 153–154, R185, R191, 261–264, and K336; these read RD and RPDR. D403, H407, D444, H445, and H462 together coordinate Mn(2+).

This sequence belongs to the BPG-independent phosphoglycerate mutase family. In terms of assembly, monomer. Mn(2+) is required as a cofactor.

It catalyses the reaction (2R)-2-phosphoglycerate = (2R)-3-phosphoglycerate. It participates in carbohydrate degradation; glycolysis; pyruvate from D-glyceraldehyde 3-phosphate: step 3/5. Its activity is regulated as follows. Could be inhibited during sporulation by acidification of the forespore, thus allowing accumulation of the spore's large depot of 3-phosphoglyceric acid. Functionally, essential for rapid growth and for sporulation. Catalyzes the interconversion of 2-phosphoglycerate (2-PGA) and 3-phosphoglycerate (3-PGA). This chain is 2,3-bisphosphoglycerate-independent phosphoglycerate mutase, found in Geobacillus stearothermophilus (Bacillus stearothermophilus).